We begin with the raw amino-acid sequence, 531 residues long: Plant UBX domain-containing protein 11 (531 aa).

Met1 bears the N-acetylmethionine mark. The segment covering 160–173 has biased composition (low complexity); the sequence is AVASPSTASSVQPS. Disordered stretches follow at residues 160-316 and 441-531; these read AVAS…KASD and ANAS…NDRR. Composition is skewed to polar residues over residues 174–190 and 201–214; these read ETKSTVTSASTTENNDG and EPSNLCDTTKNQPA. The segment covering 290–301 has biased composition (basic and acidic residues); the sequence is VDTKETMKPKDE. One can recognise a UBX domain in the interval 312–390; it reads KKASDVHLNI…RLFDRQALVV (79 aa). Composition is skewed to polar residues over residues 441–478 and 486–496; these read ANASSSVPERQTRPNTEVRNNLGQVGTSFQDPSEGRSN and TSRIGSNIHTL.

As to quaternary structure, interacts with CDC48A.

This Arabidopsis thaliana (Mouse-ear cress) protein is Plant UBX domain-containing protein 11.